Consider the following 365-residue polypeptide: tRNA/tmRNA (uracil-C(5))-methyltransferase (365 aa).

S-adenosyl-L-methionine contacts are provided by Q189, Y217, N222, E238, and D298. Catalysis depends on C323, which acts as the Nucleophile. E357 (proton acceptor) is an active-site residue.

This sequence belongs to the class I-like SAM-binding methyltransferase superfamily. RNA M5U methyltransferase family. TrmA subfamily.

The catalysed reaction is uridine(54) in tRNA + S-adenosyl-L-methionine = 5-methyluridine(54) in tRNA + S-adenosyl-L-homocysteine + H(+). The enzyme catalyses uridine(341) in tmRNA + S-adenosyl-L-methionine = 5-methyluridine(341) in tmRNA + S-adenosyl-L-homocysteine + H(+). Its function is as follows. Dual-specificity methyltransferase that catalyzes the formation of 5-methyluridine at position 54 (m5U54) in all tRNAs, and that of position 341 (m5U341) in tmRNA (transfer-mRNA). This is tRNA/tmRNA (uracil-C(5))-methyltransferase from Pseudoalteromonas atlantica (strain T6c / ATCC BAA-1087).